A 453-amino-acid chain; its full sequence is Bifunctional protein GlmU (453 aa).

A pyrophosphorylase region spans residues 1–226; the sequence is MVAIAILAAG…YEEILGINDR (226 aa). UDP-N-acetyl-alpha-D-glucosamine-binding positions include 7 to 10, Lys21, Gln73, and 78 to 79; these read LAAG and GT. Asp103 lines the Mg(2+) pocket. Residues Gly140, Glu155, Asn170, and Asn224 each coordinate UDP-N-acetyl-alpha-D-glucosamine. Asn224 provides a ligand contact to Mg(2+). The segment at 227 to 247 is linker; sequence KQLALAYQILQNRIKDQAMAA. Residues 248-453 are N-acetyltransferase; the sequence is GVTLIDPDSI…GWRLKQPDPT (206 aa). 2 residues coordinate UDP-N-acetyl-alpha-D-glucosamine: Arg329 and Lys347. Residue His359 is the Proton acceptor of the active site. Residues Tyr362 and Asn373 each contribute to the UDP-N-acetyl-alpha-D-glucosamine site. Residues Ala376, 382-383, Ser401, Ala419, and Arg436 contribute to the acetyl-CoA site; that span reads NY.

It in the N-terminal section; belongs to the N-acetylglucosamine-1-phosphate uridyltransferase family. This sequence in the C-terminal section; belongs to the transferase hexapeptide repeat family. Homotrimer. Mg(2+) is required as a cofactor.

It is found in the cytoplasm. It catalyses the reaction alpha-D-glucosamine 1-phosphate + acetyl-CoA = N-acetyl-alpha-D-glucosamine 1-phosphate + CoA + H(+). The enzyme catalyses N-acetyl-alpha-D-glucosamine 1-phosphate + UTP + H(+) = UDP-N-acetyl-alpha-D-glucosamine + diphosphate. It functions in the pathway nucleotide-sugar biosynthesis; UDP-N-acetyl-alpha-D-glucosamine biosynthesis; N-acetyl-alpha-D-glucosamine 1-phosphate from alpha-D-glucosamine 6-phosphate (route II): step 2/2. The protein operates within nucleotide-sugar biosynthesis; UDP-N-acetyl-alpha-D-glucosamine biosynthesis; UDP-N-acetyl-alpha-D-glucosamine from N-acetyl-alpha-D-glucosamine 1-phosphate: step 1/1. Its pathway is bacterial outer membrane biogenesis; LPS lipid A biosynthesis. In terms of biological role, catalyzes the last two sequential reactions in the de novo biosynthetic pathway for UDP-N-acetylglucosamine (UDP-GlcNAc). The C-terminal domain catalyzes the transfer of acetyl group from acetyl coenzyme A to glucosamine-1-phosphate (GlcN-1-P) to produce N-acetylglucosamine-1-phosphate (GlcNAc-1-P), which is converted into UDP-GlcNAc by the transfer of uridine 5-monophosphate (from uridine 5-triphosphate), a reaction catalyzed by the N-terminal domain. In Cyanothece sp. (strain PCC 7425 / ATCC 29141), this protein is Bifunctional protein GlmU.